The sequence spans 319 residues: tRNA dimethylallyltransferase (319 aa).

An ATP-binding site is contributed by 26-33 (GPTAAGKS). 28-33 (TAAGKS) serves as a coordination point for substrate. Positions 51–54 (DSMQ) are interaction with substrate tRNA.

The protein belongs to the IPP transferase family. As to quaternary structure, monomer. The cofactor is Mg(2+).

The catalysed reaction is adenosine(37) in tRNA + dimethylallyl diphosphate = N(6)-dimethylallyladenosine(37) in tRNA + diphosphate. Functionally, catalyzes the transfer of a dimethylallyl group onto the adenine at position 37 in tRNAs that read codons beginning with uridine, leading to the formation of N6-(dimethylallyl)adenosine (i(6)A). The chain is tRNA dimethylallyltransferase from Salinispora tropica (strain ATCC BAA-916 / DSM 44818 / JCM 13857 / NBRC 105044 / CNB-440).